Here is a 427-residue protein sequence, read N- to C-terminus: Lactadherin (427 aa).

A signal peptide spans 1–18 (MPCPRLLAALFCSSGLFA). EGF-like domains follow at residues 20 to 59 (SGDFCDSSLCLHGGTCLLNEDRTPPFYCLCPEGFTGLLCN) and 62 to 106 (EHGP…IHCE). Disulfide bonds link Cys24–Cys35, Cys29–Cys47, and Cys49–Cys58. Ser27 carries O-linked (Fuc...) serine; in PAS-6 glycosylation. Thr34 carries an O-linked (Fuc...) threonine; in PAS-7 glycan. A glycan (N-linked (GlcNAc...) (hybrid) asparagine; in PAS-6 and PAS-7) is linked at Asn59. 6 disulfides stabilise this stretch: Cys66–Cys77, Cys71–Cys94, Cys96–Cys105, Cys109–Cys265, Cys252–Cys256, and Cys270–Cys427. The Cell attachment site signature appears at 85-87 (RGD). F5/8 type C domains follow at residues 109–265 (CTSP…LLGC) and 270–427 (CTEP…LLGC). Asn227 carries an N-linked (GlcNAc...) (high mannose) asparagine; in PAS-6 glycan.

In terms of processing, the two O-linked glycans consist of Gal, GlcNAc and Fuc, with probably Fuc as reducing terminal sugar. Milk and spermatozoan. Also present in epididymis, kidney, heart, lymphatic gland and spleen but not esophagus, small intestine, muscle and liver.

It localises to the membrane. The protein resides in the secreted. Its subcellular location is the cytoplasmic vesicle. It is found in the secretory vesicle. The protein localises to the acrosome membrane. In terms of biological role, contributes to phagocytic removal of apoptotic cells in many tissues. Plays an important role in the maintenance of intestinal epithelial homeostasis and the promotion of mucosal healing. Promotes VEGF-dependent neovascularization. Specific ligand for the alpha-v/beta-3 and alpha-v/beta-5 receptors. Also binds to phosphatidylserine-enriched cell surfaces in a receptor-independent manner. Zona pellucida-binding protein which may play a role in gamete interaction. In Bos taurus (Bovine), this protein is Lactadherin (MFGE8).